The following is an 866-amino-acid chain: MHEQYQPRDIEVAAQQKWEKTAAFKAVEDASRPKYYCLSMFPYPSGKLHMGHVRNYTIGDVLSRYMALKGYNVLQPMGWDAFGMPAENAALKNQVAPAAWTYSNIEYMKTQLKSLGFAIDWEREVTTCKPDYYRWEQWLFTRLFEKGVIYRKNGVVNWDPVDQTVLANEQVIDGRGWRSGALVEKREIPMYYFGITQYADELLADLDTLDWPPQVATMQRNWIGKSFGADVRFAYDEASIGSAGELTVYTTRPDTLMGATYVAVAAEHPLATQAAANDPALQAFIAKCKAGSVAEADMATMEKEGMPTGLFVVHPLTGAKLPVWVANYVLMSYGSGAVMAVPAHDERDFAFANKYALPIQQVIALKEGDATFDASTWQDWYATKDDSTRLVNSGKYDGLDFQGAFDAIVADLAAKAAGEKKTQYRLRDWGISRQRYWGCPIPIIHCDSCGDVPVPADQLPVVLPENVVPDGSGNPLAKMPEFYETTCPCCGKPARRETDTMDTFVESSWYFARYASPDCATGMVDDRARYWLNVDQYIGGIEHAILHLLYARFFNKLMRDEGLLANDEPFQRLLTQGMVVCETFYRDLDNGSKEWITPADVVIERDGKGKIIAATHKADGLPVVVGGIEKMSKSKNNGVDPQALIEQYGADTARLFMMFAAPPSQSLEWSDAGVEGAYRFLKRLYKIVSEYVAGGVAERFVAGELTADEKALRLKLHTTIQKVSDDFGVRQQFNTAIAAVMELLNLFDRTEASRAVRQEVLESVVVLLSPIVPHICETLWSALKPGSELLAQRWPEVDPAALVQDEIELVVQVNGKLRGSVRVAADAGRDVIEAAALAHEQVRKFMDGQPAKKVIVVPGRLVNIVV.

The 'HIGH' region motif lies at 42-52 (PYPSGKLHMGH). A 'KMSKS' region motif is present at residues 630–634 (KMSKS). An ATP-binding site is contributed by K633.

It belongs to the class-I aminoacyl-tRNA synthetase family.

It is found in the cytoplasm. The enzyme catalyses tRNA(Leu) + L-leucine + ATP = L-leucyl-tRNA(Leu) + AMP + diphosphate. The chain is Leucine--tRNA ligase from Laribacter hongkongensis (strain HLHK9).